We begin with the raw amino-acid sequence, 193 residues long: Auxin-induced protein 22D (193 aa).

The tract at residues 16–68 (ATELRLGLPGSDEPEKRATARSNKRSSPEASDEESISNGSDVTKEDNVVPPAK) is disordered. An EAR-like (transcriptional repression) motif is present at residues 19–23 (LRLGL). The 88-residue stretch at 97-184 (GMYVKVSMAG…SCKRLRIMKG (88 aa)) folds into the PB1 domain.

Belongs to the Aux/IAA family. As to quaternary structure, homodimers and heterodimers.

The protein resides in the nucleus. Aux/IAA proteins are short-lived transcriptional factors that function as repressors of early auxin response genes at low auxin concentrations. Repression is thought to result from the interaction with auxin response factors (ARFs), proteins that bind to the auxin-responsive promoter element (AuxRE). Formation of heterodimers with ARF proteins may alter their ability to modulate early auxin response genes expression. The chain is Auxin-induced protein 22D (AUX22D) from Vigna radiata var. radiata (Mung bean).